Consider the following 249-residue polypeptide: PF03932 family protein CutC (249 aa).

Belongs to the CutC family.

It localises to the cytoplasm. This chain is PF03932 family protein CutC, found in Bacteroides thetaiotaomicron (strain ATCC 29148 / DSM 2079 / JCM 5827 / CCUG 10774 / NCTC 10582 / VPI-5482 / E50).